Consider the following 298-residue polypeptide: ATP phosphoribosyltransferase (298 aa).

It belongs to the ATP phosphoribosyltransferase family. Long subfamily. Mg(2+) is required as a cofactor.

The protein localises to the cytoplasm. It carries out the reaction 1-(5-phospho-beta-D-ribosyl)-ATP + diphosphate = 5-phospho-alpha-D-ribose 1-diphosphate + ATP. It functions in the pathway amino-acid biosynthesis; L-histidine biosynthesis; L-histidine from 5-phospho-alpha-D-ribose 1-diphosphate: step 1/9. With respect to regulation, feedback inhibited by histidine. Catalyzes the condensation of ATP and 5-phosphoribose 1-diphosphate to form N'-(5'-phosphoribosyl)-ATP (PR-ATP). Has a crucial role in the pathway because the rate of histidine biosynthesis seems to be controlled primarily by regulation of HisG enzymatic activity. The protein is ATP phosphoribosyltransferase of Aliivibrio fischeri (strain MJ11) (Vibrio fischeri).